We begin with the raw amino-acid sequence, 63 residues long: Large ribosomal subunit protein uL29 (63 aa).

Belongs to the universal ribosomal protein uL29 family.

The polypeptide is Large ribosomal subunit protein uL29 (Pseudomonas aeruginosa (strain UCBPP-PA14)).